The sequence spans 649 residues: DNA mismatch repair protein MutL (649 aa).

This sequence belongs to the DNA mismatch repair MutL/HexB family.

This protein is involved in the repair of mismatches in DNA. It is required for dam-dependent methyl-directed DNA mismatch repair. May act as a 'molecular matchmaker', a protein that promotes the formation of a stable complex between two or more DNA-binding proteins in an ATP-dependent manner without itself being part of a final effector complex. This is DNA mismatch repair protein MutL from Streptococcus pneumoniae serotype 2 (strain D39 / NCTC 7466).